A 529-amino-acid polypeptide reads, in one-letter code: Zinc finger protein 572 (529 aa).

The segment at 1–62 is disordered; that stretch reads MEQEKKLLVS…EWSKRHRPQH (62 aa). Glycyl lysine isopeptide (Lys-Gly) (interchain with G-Cter in SUMO2) cross-links involve residues lysine 5 and lysine 6. Residues 26–35 show a composition bias toward polar residues; that stretch reads TGDTSMNNLE. Over residues 36–55 the composition is skewed to basic and acidic residues; that stretch reads TVHHNNSKADKLKEKPSEWS. C2H2-type zinc fingers lie at residues 132-154, 160-182, 188-210, 216-238, 244-266, 272-294, 300-322, 328-350, 384-406, 412-434, 440-462, and 468-490; these read YKCS…QRTH, YKCS…LRMH, YQCG…ERTH, YKCP…HRSH, YECS…QRTH, YKCP…QRTH, YKCL…QRIH, YQCP…QKMH, YRCC…QRTH, YRCS…QRTH, YKCP…RRTH, and YKCT…RKIH.

This sequence belongs to the krueppel C2H2-type zinc-finger protein family.

It is found in the nucleus. May be involved in transcriptional regulation. This Homo sapiens (Human) protein is Zinc finger protein 572 (ZNF572).